We begin with the raw amino-acid sequence, 632 residues long: Golgin subfamily A member 8O (632 aa).

The disordered stretch occupies residues 1–76 (MAEETQHNKL…TSSATLKDLE (76 aa)). The span at 38 to 50 (TNGSIPETATSGG) shows a compositional bias: polar residues. Coiled-coil stretches lie at residues 85 to 150 (VLDS…TDLY) and 209 to 421 (ELEQ…SLMA). Disordered stretches follow at residues 423 to 452 (PGEGHGGEHLDSEGEEAPRPMPSVPEDPES), 505 to 524 (DAALGGGHHQAGAQGGDEGE), and 552 to 612 (NSAD…EHPG). A compositionally biased stretch (basic and acidic residues) spans 427 to 440 (HGGEHLDSEGEEAP). Residues 508-520 (LGGGHHQAGAQGG) are compositionally biased toward gly residues. The segment covering 569–578 (AADKHGDLRE) has biased composition (basic and acidic residues).

Belongs to the GOLGA6 family.

This is Golgin subfamily A member 8O (GOLGA8O) from Homo sapiens (Human).